Here is a 219-residue protein sequence, read N- to C-terminus: Peptide methionine sulfoxide reductase MsrA (219 aa).

Residue Cys-58 is part of the active site.

It belongs to the MsrA Met sulfoxide reductase family.

The enzyme catalyses L-methionyl-[protein] + [thioredoxin]-disulfide + H2O = L-methionyl-(S)-S-oxide-[protein] + [thioredoxin]-dithiol. The catalysed reaction is [thioredoxin]-disulfide + L-methionine + H2O = L-methionine (S)-S-oxide + [thioredoxin]-dithiol. Functionally, has an important function as a repair enzyme for proteins that have been inactivated by oxidation. Catalyzes the reversible oxidation-reduction of methionine sulfoxide in proteins to methionine. In Ectopseudomonas mendocina (strain ymp) (Pseudomonas mendocina), this protein is Peptide methionine sulfoxide reductase MsrA.